Reading from the N-terminus, the 207-residue chain is MSPVVATVIFALAAYLIGSISFAVVVSRAMGLADPRTYGSGNPGATNVLRSGNKKAAILTLLGDAAKGGLAVWLAQWLAPRFGVDETGIALVVIAVFLGHLFPVFHRFEGGKGVATAAGILLALNVWLGLATLATWLIIAVFFRYSSLAALVSAVFAPFFYVLMNGFDWIAGAVALMAVLLIARHRANIAKLLAGKESRIGEKKKAA.

5 consecutive transmembrane segments (helical) span residues 4–24, 58–78, 86–106, 120–140, and 162–182; these read VVATVIFALAAYLIGSISFAV, ILTLLGDAAKGGLAVWLAQWL, ETGIALVVIAVFLGHLFPVFH, ILLALNVWLGLATLATWLIIA, and VLMNGFDWIAGAVALMAVLLI.

Belongs to the PlsY family. In terms of assembly, probably interacts with PlsX.

It localises to the cell inner membrane. The enzyme catalyses an acyl phosphate + sn-glycerol 3-phosphate = a 1-acyl-sn-glycero-3-phosphate + phosphate. It participates in lipid metabolism; phospholipid metabolism. Catalyzes the transfer of an acyl group from acyl-phosphate (acyl-PO(4)) to glycerol-3-phosphate (G3P) to form lysophosphatidic acid (LPA). This enzyme utilizes acyl-phosphate as fatty acyl donor, but not acyl-CoA or acyl-ACP. The polypeptide is Glycerol-3-phosphate acyltransferase (Ralstonia pickettii (strain 12J)).